Reading from the N-terminus, the 865-residue chain is DNA topoisomerase 1 (865 aa).

The Toprim domain occupies 3–142 (KALVIVESPA…RYSRVVFNEI (140 aa)). Glu-9 lines the Mg(2+) pocket. The interval 37–65 (LPTSGSAAKKSADSTSTKTAKKPKKDERG) is disordered. Residues 39–54 (TSGSAAKKSADSTSTK) are compositionally biased toward low complexity. Asp-111 provides a ligand contact to Mg(2+). The Topo IA-type catalytic domain occupies 158-575 (NIDRVNAQQA…HFFSDFTQQL (418 aa)). The interval 192–197 (SAGRVQ) is interaction with DNA. The O-(5'-phospho-DNA)-tyrosine intermediate role is filled by Tyr-319. 3 consecutive C4-type zinc fingers follow at residues 599–630 (CPTCGRKMGIRTASTGVFLGCSGYALPPKERC), 662–689 (CPKCGTAMDSYLIDPKRKLHVCGNNPTC), and 711–736 (CEKCGSEMHLKMGRFGKYMACTNEEC).

It belongs to the type IA topoisomerase family. As to quaternary structure, monomer. Requires Mn(2+) as cofactor. The cofactor is Ca(2+).

It carries out the reaction ATP-independent breakage of single-stranded DNA, followed by passage and rejoining.. Functionally, releases the supercoiling and torsional tension of DNA, which is introduced during the DNA replication and transcription, by transiently cleaving and rejoining one strand of the DNA duplex. Introduces a single-strand break via transesterification at a target site in duplex DNA. The scissile phosphodiester is attacked by the catalytic tyrosine of the enzyme, resulting in the formation of a DNA-(5'-phosphotyrosyl)-enzyme intermediate and the expulsion of a 3'-OH DNA strand. The free DNA strand then undergoes passage around the unbroken strand, thus removing DNA supercoils. Finally, in the religation step, the DNA 3'-OH attacks the covalent intermediate to expel the active-site tyrosine and restore the DNA phosphodiester backbone. In Escherichia coli (strain K12), this protein is DNA topoisomerase 1.